Consider the following 1643-residue polypeptide: Lysine-specific demethylase 6B (1643 aa).

Disordered stretches follow at residues 52-88 (GQPP…PLHG), 190-680 (AKRG…PLED), 704-807 (ESIR…LKSL), and 822-1096 (GAAV…RSLS). Composition is skewed to low complexity over residues 63 to 74 (SHGSSSGHPSKP) and 212 to 223 (AALSGPSGEEGL). Ser224 is modified (phosphoserine). The span at 242–266 (PGLPLPPPPLPPPPPPPPPPPPPLP) shows a compositional bias: pro residues. Positions 291–307 (GPERKGSAPPERQEQRH) are enriched in basic and acidic residues. Over residues 332 to 342 (AAPPGPGPRPP) the composition is skewed to pro residues. A compositionally biased stretch (basic and acidic residues) spans 359–370 (DLRESRVQRSRM). Residues 394–412 (PGTTTSSSSSSSSNTGLRG) show a composition bias toward low complexity. Residues 460–484 (SLPPGPSSPPPPPCPRLLRPPPPPA) show a composition bias toward pro residues. The segment covering 550–569 (TTSSSNSNSGSHSSSPAGPV) has biased composition (low complexity). 2 stretches are compositionally biased toward pro residues: residues 584 to 600 (LPRP…PPLV) and 641 to 658 (GPGP…PVPP). A compositionally biased stretch (basic and acidic residues) spans 704 to 714 (ESIRKEEEQQQ). A compositionally biased stretch (low complexity) spans 740 to 764 (TAPTTTAPAVAVTTTTTTTTTTTAT). Residues 772–800 (PPALPPPPPLAKFPPPSQPQPPPPPPPSP) show a composition bias toward pro residues. A compositionally biased stretch (low complexity) spans 843-877 (SGATALPPTSAAPSAQGSPQPSASSSSQFSTSGGP). Over residues 889–904 (VPGPMTPTQPPPPLSL) the composition is skewed to pro residues. Residues 916-929 (EISRACETLVERVG) are compositionally biased toward basic and acidic residues. A compositionally biased stretch (basic residues) spans 972 to 989 (CKRRQKEHQKEHRRHRRA). A compositionally biased stretch (basic and acidic residues) spans 990–1003 (CKDSVGRRPREGRA). The segment covering 1004 to 1016 (KAKAKVPKEKSRR) has biased composition (basic residues). The segment covering 1047–1067 (PTAPAPPSAPAPSAQPTPPSA) has biased composition (pro residues). Lys1109 is covalently cross-linked (Glycyl lysine isopeptide (Lys-Gly) (interchain with G-Cter in SUMO2)). The tract at residues 1288–1325 (FQESLQEEKESEDEESEEPDSTTGTPPSSAPDPKNHHI) is disordered. The segment covering 1296–1307 (KESEDEESEEPD) has biased composition (acidic residues). Residues 1339–1502 (RWKPQLQELL…YQLALERYEW (164 aa)) enclose the JmjC domain. 3 residues coordinate Fe cation: His1390, Glu1392, and His1470. Zn(2+)-binding residues include Cys1575, Cys1578, Cys1602, and Cys1605.

It belongs to the UTX family. Interacts with TLE1. Component of the MLL4 complex, at least composed of KMT2B/MLL4, ASH2L, RBBP5, WDR5, and KDM6B. Interacts with TBX21, SMARCA4, SMARCC1 and SMARCC2. The cofactor is L-ascorbate. It depends on Fe(2+) as a cofactor.

Its subcellular location is the nucleus. It catalyses the reaction N(6),N(6),N(6)-trimethyl-L-lysyl(27)-[histone H3] + 2 2-oxoglutarate + 2 O2 = N(6)-methyl-L-lysyl(27)-[histone H3] + 2 formaldehyde + 2 succinate + 2 CO2. Histone demethylase that specifically demethylates 'Lys-27' of histone H3, thereby playing a central role in histone code. Demethylates trimethylated and dimethylated H3 'Lys-27'. Plays a central role in regulation of posterior development, by regulating HOX gene expression. Involved in inflammatory response by participating in macrophage differentiation in case of inflammation by regulating gene expression and macrophage differentiation. Plays a demethylase-independent role in chromatin remodeling to regulate T-box family member-dependent gene expression by acting as a link between T-box factors and the SMARCA4-containing SWI/SNF remodeling complex. In Homo sapiens (Human), this protein is Lysine-specific demethylase 6B (KDM6B).